A 151-amino-acid polypeptide reads, in one-letter code: UPF0208 membrane protein Spro_3315 (151 aa).

2 helical membrane passes run 46-64 and 70-90; these read FAVR…WQIA and GPAI…LWWL.

Belongs to the UPF0208 family.

The protein resides in the cell inner membrane. The sequence is that of UPF0208 membrane protein Spro_3315 from Serratia proteamaculans (strain 568).